The following is a 330-amino-acid chain: MFFIIHSLVTSVFLTALGPQNRTMHFVTEFVLLGFHGQREMQSCFFSFILVLYLLTLLGNGAIVCAVKLDRRLHTPMYILLGNFAFLEIWYISSTVPNMLVNILSEIKTISFSGCFLQFYFFFSLGTTECFFLSVMAYDRYLAICRPLHYPSIMTGKFCIILVCVCWVGGFLCYPVPIVLISQLPFCGPNIIDHLVCDPGPLFALACISAPSTELICYTFNSMIIFGPFLSILGSYTLVIRAVLCIPSGAGRTKAFSTCGSHLMVVSLFYGTLMVMYVSPTSGNPAGMQKIITLVYTAMTPFLNPLIYSLRNKDMKDALKRVLGLTVSQN.

Over 1 to 43 (MFFIIHSLVTSVFLTALGPQNRTMHFVTEFVLLGFHGQREMQS) the chain is Extracellular. Asn21 is a glycosylation site (N-linked (GlcNAc...) asparagine). A helical transmembrane segment spans residues 44-64 (CFFSFILVLYLLTLLGNGAIV). Residues 65 to 72 (CAVKLDRR) are Cytoplasmic-facing. The helical transmembrane segment at 73 to 93 (LHTPMYILLGNFAFLEIWYIS) threads the bilayer. Residues 94-117 (STVPNMLVNILSEIKTISFSGCFL) lie on the Extracellular side of the membrane. Cys115 and Cys207 are joined by a disulfide. Residues 118-138 (QFYFFFSLGTTECFFLSVMAY) traverse the membrane as a helical segment. Over 139 to 157 (DRYLAICRPLHYPSIMTGK) the chain is Cytoplasmic. The helical transmembrane segment at 158 to 178 (FCIILVCVCWVGGFLCYPVPI) threads the bilayer. Topologically, residues 179 to 215 (VLISQLPFCGPNIIDHLVCDPGPLFALACISAPSTEL) are extracellular. A helical transmembrane segment spans residues 216–235 (ICYTFNSMIIFGPFLSILGS). Over 236-255 (YTLVIRAVLCIPSGAGRTKA) the chain is Cytoplasmic. A helical membrane pass occupies residues 256 to 276 (FSTCGSHLMVVSLFYGTLMVM). The Extracellular portion of the chain corresponds to 277-289 (YVSPTSGNPAGMQ). A helical membrane pass occupies residues 290 to 310 (KIITLVYTAMTPFLNPLIYSL). Over 311–330 (RNKDMKDALKRVLGLTVSQN) the chain is Cytoplasmic.

This sequence belongs to the G-protein coupled receptor 1 family.

It is found in the cell membrane. Functionally, odorant receptor. This is Olfactory receptor 11H6 (OR11H6) from Homo sapiens (Human).